The following is a 949-amino-acid chain: Probable transcriptional regulatory protein STB4 (949 aa).

The segment at residues 87-113 (CELCKKRKVKCDGNNPCLNCSKHQKEC) is a DNA-binding region (zn(2)-C6 fungal-type). 2 stretches are compositionally biased toward low complexity: residues 164 to 178 (DGVS…NPNS) and 200 to 212 (SGSN…NNNS). Disordered stretches follow at residues 164–214 (DGVS…NSFP) and 862–888 (GERE…ATRS). Residues 862–874 (GEREENADERQEN) show a composition bias toward basic and acidic residues.

It is found in the nucleus. In terms of biological role, binds to SIN3. In Saccharomyces cerevisiae (strain ATCC 204508 / S288c) (Baker's yeast), this protein is Probable transcriptional regulatory protein STB4 (STB4).